The following is a 626-amino-acid chain: MPPMAKNAAVTDVVHLDSDSDSDNGVVGGRESASTIAGAATMAPRETLECRSFWKAGDYFVIPNVVTPTAPGMLEHARVHPRFLHSNATSHKWAFGAIAELLDNAVDEIQNGATFVKIDKINIVKDNSPALVFQDDGGGMDPAGLRKCMSLGYSSKKSNTTIGQYGNGFKTSTMRLGADAIVFSRSTRGGTSTQSVGILSYTFLRKTGQDDVTVPMIDIDISKERPQPIIYGSPEDWAANLEILLKWSPFSTEDELLQQFEDVGTHGTKVIIYNLWLNDEGIYELSFDDDEEDIRLRDESVNDGKRLHHKILELRSHISYHLRYSLRAYASMLYLKKFKNFKIIIRGIPVEQFNIADGFRFPEIIKYKPHTATTEQASTEIKIGFVKEAPKLAICGFNVYHKNRLIRPFWKVTMGGDSTGHGVVGVLEANFIEPAHDKQDFERSSLFQRLEARLKKIVYSYWYSHCHLLGYHKYQMPADKSKKIAIPDQPPTISTVNPSPLPSDKISQGGPIIREINLSNATSSRTVAFASPHLRNSTGLRSNFQPVQLNPQPTAADTGNNLDGKSAGEIRQENLQLFMRCEEYIKKENETEQTVKSLEKELEEFKSKCAHLALLVDAKKKEMQQA.

Residues 579–626 (MRCEEYIKKENETEQTVKSLEKELEEFKSKCAHLALLVDAKKKEMQQA) are a coiled coil.

It belongs to the MORC ATPase protein family. In terms of assembly, homodimer and heterodimer with MORC6. Component of an RNA-directed DNA methylation (RdDM) complex that contains at least MORC6, MORC1/CRT1, MORC2, SWI3D and SUVH9. Binds directly to SUVH9. It depends on Mg(2+) as a cofactor. Mn(2+) is required as a cofactor.

Its subcellular location is the nucleus. The protein resides in the endosome. Functionally, mediator of defense signaling triggered by distinct classes of R proteins. Required during hypersensitive response (HR) that confers disease resistance to turnip crinkle virus (TCV). Contributes to resistance against Pseudomonas syringae and Hyaloperonospora arabidopsidis, at early stages prior to cytosolic calcium ions Ca(2+) accumulation. Required for pathogen-associated molecular pattern (PAMP)-triggered immunity, basal resistance, non-host resistance and systemic acquired resistance (SAR). Involved in RNA-directed DNA methylation (RdDM) as a component of the RdDM machinery and required for gene silencing. May also be involved in the regulation of chromatin architecture to maintain gene silencing. Exhibits ATPase activity. The sequence is that of Protein MICRORCHIDIA 2 from Arabidopsis thaliana (Mouse-ear cress).